The primary structure comprises 580 residues: Negative elongation factor B (580 aa).

N6-acetyllysine is present on Lys519. The segment at 548–580 (LEQLDHRKPSPAQAAETPALELPLPSVPAPAPL) is disordered. Position 557 is a phosphoserine (Ser557).

The protein belongs to the NELF-B family. The NELF complex is composed of NELFA, NELFB, NELFCD (isoform NELF-C or isoform NELF-D) and NELFE; the N-terminus of NELFB binds to the NELFA:NELFCD subcomplex. Binds RNA which may help to stabilize the NELF complex on nucleic acid. Interacts with the first BRCT repeat of BRCA1. Interacts with KIAA1191. Interacts with NELFE. Widely expressed. Expressed in heart, brain, lung, placenta, liver, skeletal muscle, kidney and pancreas.

It is found in the nucleus. Essential component of the NELF complex, a complex that negatively regulates the elongation of transcription by RNA polymerase II. The NELF complex, which acts via an association with the DSIF complex and causes transcriptional pausing, is counteracted by the P-TEFb kinase complex. May be able to induce chromatin unfolding. Essential for early embryogenesis; plays an important role in maintaining the undifferentiated state of embryonic stem cells (ESCs) by preventing unscheduled expression of developmental genes. Plays a key role in establishing the responsiveness of stem cells to developmental cues; facilitates plasticity and cell fate commitment in ESCs by establishing the appropriate expression level of signaling molecules. Supports the transcription of genes involved in energy metabolism in cardiomyocytes; facilitates the association of transcription initiation factors with the promoters of the metabolism-related genes. In terms of biological role, (Microbial infection) The NELF complex is involved in HIV-1 latency possibly involving recruitment of PCF11 to paused RNA polymerase II. In vitro, binds weakly to the HIV-1 TAR RNA which is located in the long terminal repeat (LTR) of HIV-1. This chain is Negative elongation factor B (NELFB), found in Homo sapiens (Human).